We begin with the raw amino-acid sequence, 138 residues long: PilB-specific inhibitory protein CpiA (138 aa).

As to quaternary structure, interacts with PilB but not with TfpB.

Functionally, acts as a PilB inhibitor to control natural transformation. Inhibits type IV pili (T4P) extension by specifically binding and inhibiting the pilus extension ATPase PilB but not TfpB. This activity probably modulates T4P extension under different environmental conditions. The sequence is that of PilB-specific inhibitory protein CpiA from Acinetobacter baylyi (strain ATCC 33305 / BD413 / ADP1).